Here is a 174-residue protein sequence, read N- to C-terminus: Mitochondrial holo-[acyl-carrier-protein] synthase (174 aa).

It belongs to the P-Pant transferase superfamily. AcpS family.

It localises to the mitochondrion. It catalyses the reaction apo-[ACP] + CoA = holo-[ACP] + adenosine 3',5'-bisphosphate + H(+). In terms of biological role, transfers the 4'-phosphopantetheine moiety from coenzyme A to a Ser of mitochondrial acyl-carrier-protein. The sequence is that of Mitochondrial holo-[acyl-carrier-protein] synthase (PPT2) from Eremothecium gossypii (strain ATCC 10895 / CBS 109.51 / FGSC 9923 / NRRL Y-1056) (Yeast).